The primary structure comprises 131 residues: L-aspartate semialdehyde sulfurtransferase iron-sulfur subunit (131 aa).

4Fe-4S ferredoxin-type domains lie at 73-102 and 103-131; these read KVIK…MDED and YNVV…EIFE. C82, C85, C88, C92, C112, C115, C118, and C122 together coordinate [4Fe-4S] cluster.

In terms of assembly, may form a complex with MJ0100. It depends on [4Fe-4S] cluster as a cofactor.

The protein operates within amino-acid biosynthesis. Functionally, required for O-acetylhomoserine sulfhydrylase (OAHS)-independent homocysteine (Hcy) biosynthesis. Together with MJ0100, catalyzes the condensation of sulfide with aspartate semialdehyde to generate homocysteine. May be involved in the reduction of the disulfide formed in MJ0100. The polypeptide is L-aspartate semialdehyde sulfurtransferase iron-sulfur subunit (Methanocaldococcus jannaschii (strain ATCC 43067 / DSM 2661 / JAL-1 / JCM 10045 / NBRC 100440) (Methanococcus jannaschii)).